Here is a 248-residue protein sequence, read N- to C-terminus: MNLFFSAPPLVAELEVGHHLYWHLGKFTVHGQVLIASWIAIALILTVVLLGTRQLQREPAGLQNFIEYTLEFVQSIARAQIGEKNFRPWVPYVGTLFLFIFVSNWMGNLFPWKLIPLPEGELASPTNDINTTAGLALLTSVMYFVAGISKRGLSYFKKYIEPTPVLLPINVLEDFTKPLSLSFRLFGNILAEELVIAVLVLLVPLLIPVPVMILFLFTGAIQALIFSTLSAAYIGEALEGHGGGDHHD.

The next 5 helical transmembrane spans lie at 31 to 51 (GQVLIASWIAIALILTVVLLG), 90 to 110 (VPYVGTLFLFIFVSNWMGNLF), 129 to 149 (INTTAGLALLTSVMYFVAGIS), 195 to 215 (VIAVLVLLVPLLIPVPVMILF), and 216 to 236 (LFTGAIQALIFSTLSAAYIGE).

The protein belongs to the ATPase A chain family. As to quaternary structure, F-type ATPases have 2 components, CF(1) - the catalytic core - and CF(0) - the membrane proton channel. CF(1) has five subunits: alpha(3), beta(3), gamma(1), delta(1), epsilon(1). CF(0) has four main subunits: a, b, b' and c.

Its subcellular location is the cellular thylakoid membrane. In terms of biological role, key component of the proton channel; it plays a direct role in the translocation of protons across the membrane. The sequence is that of ATP synthase subunit a from Synechococcus sp. (strain JA-3-3Ab) (Cyanobacteria bacterium Yellowstone A-Prime).